A 202-amino-acid chain; its full sequence is Large ribosomal subunit protein bL25 (202 aa).

Belongs to the bacterial ribosomal protein bL25 family. CTC subfamily. Part of the 50S ribosomal subunit; part of the 5S rRNA/L5/L18/L25 subcomplex. Contacts the 5S rRNA. Binds to the 5S rRNA independently of L5 and L18.

Its function is as follows. This is one of the proteins that binds to the 5S RNA in the ribosome where it forms part of the central protuberance. The sequence is that of Large ribosomal subunit protein bL25 from Chlorobium luteolum (strain DSM 273 / BCRC 81028 / 2530) (Pelodictyon luteolum).